Here is a 407-residue protein sequence, read N- to C-terminus: [Pyruvate dehydrogenase (acetyl-transferring)] kinase isozyme 2, mitochondrial (407 aa).

Positions 135-364 constitute a Histidine kinase domain; it reads LEYKDTYGDD…DAVIYLKALS (230 aa). 2 positions are modified to phosphotyrosine: Tyr-215 and Tyr-216. Residues 251-258, Asp-290, 309-310, and 325-330 contribute to the ATP site; these read ELFKNAMR, ST, and GFGYGL. Lys-376 bears the N6-succinyllysine mark.

This sequence belongs to the PDK/BCKDK protein kinase family. Homodimer, and heterodimer with PDK1. Interacts with the pyruvate dehydrogenase complex subunit DLAT, and is part of the multimeric pyruvate dehydrogenase complex that contains multiple copies of pyruvate dehydrogenase (E1), dihydrolipoamide acetyltransferase (DLAT, E2) and lipoamide dehydrogenase (DLD, E3). In terms of tissue distribution, expressed in many tissues, with the highest level in heart and skeletal muscle, intermediate levels in brain, kidney, pancreas and liver, and low levels in placenta and lung.

It localises to the mitochondrion matrix. It catalyses the reaction L-seryl-[pyruvate dehydrogenase E1 alpha subunit] + ATP = O-phospho-L-seryl-[pyruvate dehydrogenase E1 alpha subunit] + ADP + H(+). With respect to regulation, activity is enhanced by binding to the pyruvate dehydrogenase subunit DLAT. Inhibited by ADP and pyruvate; these compounds interfere with DLAT binding and thereby inhibit kinase activity. Inhibited by dichloroacetate. Inhibited by AZD7545; this compound interferes with DLAT binding and thereby inhibits kinase activity. In terms of biological role, kinase that plays a key role in the regulation of glucose and fatty acid metabolism and homeostasis via phosphorylation of the pyruvate dehydrogenase subunits PDHA1 and PDHA2. This inhibits pyruvate dehydrogenase activity, and thereby regulates metabolite flux through the tricarboxylic acid cycle, down-regulates aerobic respiration and inhibits the formation of acetyl-coenzyme A from pyruvate. Inhibition of pyruvate dehydrogenase decreases glucose utilization and increases fat metabolism. Mediates cellular responses to insulin. Plays an important role in maintaining normal blood glucose levels and in metabolic adaptation to nutrient availability. Via its regulation of pyruvate dehydrogenase activity, plays an important role in maintaining normal blood pH and in preventing the accumulation of ketone bodies under starvation. Plays a role in the regulation of cell proliferation and in resistance to apoptosis under oxidative stress. Plays a role in p53/TP53-mediated apoptosis. In Homo sapiens (Human), this protein is [Pyruvate dehydrogenase (acetyl-transferring)] kinase isozyme 2, mitochondrial (PDK2).